A 229-amino-acid chain; its full sequence is Mannose-specific lectin TAR1 (229 aa).

A signal peptide spans 1 to 23; the sequence is MAKLLLFLLPAILGLLIPRSAVA. 2 consecutive Bulb-type lectin domains span residues 26 to 131 and 145 to 229; these read TNYL…PWVP and DNLL…DYVL. Residues 51–55, Tyr-59, Trp-63, Gln-64, 170–174, Tyr-178, and 182–185 each bind beta-D-mannose; these read QNDCN, QGDCN, and YGWQ. Residues 51–59 carry the Carbohydrate-binding motif 1 motif; sequence QNDCNLVLY. Disulfide bonds link Cys-54–Cys-74 and Cys-173–Cys-195. Positions 170–178 match the Carbohydrate-binding motif 2 motif; it reads QGDCNLVLY.

As to quaternary structure, forms heterotetramer of 2 chains 1 and 2 chains 2 arranged as a dimer of chain 1 and chain 2 heterodimers.

The protein localises to the secreted. In terms of biological role, mannose-specific lectin. Shows agglutinating activity towards erythrocytes from rabbit. The chain is Mannose-specific lectin TAR1 from Colocasia esculenta (Wild taro).